Reading from the N-terminus, the 416-residue chain is Carboxypeptidase B (416 aa).

The N-terminal stretch at 1-15 (MAFLILVTLALASAH) is a signal peptide. Residues 16-109 (YSGEHFEGEK…LEGQFGRQVP (94 aa)) constitute a propeptide, activation peptide. The region spanning 117 to 411 (KYNRWETIEA…LAIKHLARYV (295 aa)) is the Peptidase M14 domain. Residues H175 and E178 each coordinate Zn(2+). Residues 175–178 (HARE), R233, and 250–251 (TR) contribute to the substrate site. Intrachain disulfides connect C244–C267 and C258–C272. A Zn(2+)-binding site is contributed by H303. Substrate is bound by residues 304–305 (SY) and Y355. E377 acts as the Proton donor/acceptor in catalysis.

It belongs to the peptidase M14 family. Zn(2+) serves as cofactor.

It is found in the secreted. The protein localises to the zymogen granule lumen. It carries out the reaction Preferential release of a C-terminal lysine or arginine amino acid.. The chain is Carboxypeptidase B (CPB1) from Canis lupus familiaris (Dog).